The following is a 72-amino-acid chain: Prokaryotic ubiquitin-like protein Pup (72 aa).

Over residues Met-1–Gln-10 the composition is skewed to gly residues. The interval Met-1–Asp-45 is disordered. Residues Gln-10–Glu-60 are a coiled coil. The segment at Gln-28 to Phe-66 is ARC ATPase binding. Over residues Leu-33–Asp-42 the composition is skewed to basic and acidic residues. Gln-72 is subject to Deamidated glutamine. An Isoglutamyl lysine isopeptide (Gln-Lys) (interchain with K-? in acceptor proteins) cross-link involves residue Gln-72.

This sequence belongs to the prokaryotic ubiquitin-like protein family. As to quaternary structure, strongly interacts with the proteasome-associated ATPase ARC through a hydrophobic interface; the interacting region of Pup lies in its C-terminal half. There is one Pup binding site per ARC hexamer ring. In terms of processing, is modified by deamidation of its C-terminal glutamine to glutamate by the deamidase Dop, a prerequisite to the subsequent pupylation process.

The protein operates within protein degradation; proteasomal Pup-dependent pathway. Its function is as follows. Protein modifier that is covalently attached to lysine residues of substrate proteins, thereby targeting them for proteasomal degradation. The tagging system is termed pupylation. This chain is Prokaryotic ubiquitin-like protein Pup, found in Streptomyces griseus subsp. griseus (strain JCM 4626 / CBS 651.72 / NBRC 13350 / KCC S-0626 / ISP 5235).